The sequence spans 373 residues: WAT1-related protein At4g30420 (373 aa).

10 helical membrane-spanning segments follow: residues 2–22 (AMTMIQLCYAGVTLFARATLV), 29–49 (VFILYRQAFATIFIFPFLYLS), 55–75 (IAISSLDLKSFSLIFLVSLIG), 94–114 (MGSAVGNIIPAITFLISFLAG), 125–145 (GLAKIAGTILCVAGAISMTLL), 173–193 (WLIGCLFLFSSTLCWSFWLIL), 205–225 (LSLSAWMCLFGTIQCAVVTFF), 244–264 (CLYAGIGASALSFTVQAWAIA), 270–290 (FSALFNPLCTVIVTILAALFF), and 294–314 (IYTGSLIGGLGVILGLYTVLW). EamA domains are found at residues 9–135 (CYAG…TILC) and 186–313 (CWSF…YTVL).

Belongs to the drug/metabolite transporter (DMT) superfamily. Plant drug/metabolite exporter (P-DME) (TC 2.A.7.4) family.

Its subcellular location is the membrane. The chain is WAT1-related protein At4g30420 from Arabidopsis thaliana (Mouse-ear cress).